The chain runs to 469 residues: Cytosolic Fe-S cluster assembly factor NAR1 (469 aa).

[4Fe-4S] cluster contacts are provided by Cys-20, Cys-56, Cys-59, Cys-62, Cys-168, Cys-215, Cys-394, and Cys-398.

The protein belongs to the NARF family.

In terms of biological role, component of the cytosolic Fe/S protein assembly machinery. Required for maturation of extramitochondrial Fe/S proteins. May play a role in the transfer of pre-assembled Fe/S clusters to target apoproteins. The polypeptide is Cytosolic Fe-S cluster assembly factor NAR1 (NAR1) (Kluyveromyces lactis (strain ATCC 8585 / CBS 2359 / DSM 70799 / NBRC 1267 / NRRL Y-1140 / WM37) (Yeast)).